The chain runs to 253 residues: MRELIPKEYNVLSITGGQKNERELEKMCNYDVLIYNSAISAGHSIDIKDHFDSVFLVVNSPTPNGRWVTARIDEMFQMAARVRNPITKKIYITTDTFHYRNKACTVNGDEEYYSAAMKSGFDILMSGRNIVPNQLAAMCKSEFEVLVLDWITTKAFPGSIITEEYLNGSQTAEVVLNNDHVFSIQADQFHLAVIEDSLSNPKKYIDCVAGVRRRKAVPVDVFYENEEHIAALKALPYIEYFDSKRQVEVRMLQ.

This is an uncharacterized protein from Ostreid herpesvirus 1 (isolate France) (OsHV-1).